The following is a 430-amino-acid chain: Serine--tRNA ligase (430 aa).

Position 237-239 (237-239 (TAE)) interacts with L-serine. 268–270 (RSE) provides a ligand contact to ATP. Glu-291 serves as a coordination point for L-serine. 355 to 358 (EISS) contributes to the ATP binding site. Residue Ser-391 coordinates L-serine.

This sequence belongs to the class-II aminoacyl-tRNA synthetase family. Type-1 seryl-tRNA synthetase subfamily. In terms of assembly, homodimer. The tRNA molecule binds across the dimer.

The protein localises to the cytoplasm. It catalyses the reaction tRNA(Ser) + L-serine + ATP = L-seryl-tRNA(Ser) + AMP + diphosphate + H(+). The enzyme catalyses tRNA(Sec) + L-serine + ATP = L-seryl-tRNA(Sec) + AMP + diphosphate + H(+). It participates in aminoacyl-tRNA biosynthesis; selenocysteinyl-tRNA(Sec) biosynthesis; L-seryl-tRNA(Sec) from L-serine and tRNA(Sec): step 1/1. Functionally, catalyzes the attachment of serine to tRNA(Ser). Is also able to aminoacylate tRNA(Sec) with serine, to form the misacylated tRNA L-seryl-tRNA(Sec), which will be further converted into selenocysteinyl-tRNA(Sec). This Escherichia coli O139:H28 (strain E24377A / ETEC) protein is Serine--tRNA ligase.